The sequence spans 426 residues: Chordin-like protein 2 (426 aa).

The first 25 residues, 1–25 (MVPGVRIIPSLLGLVMFWLPLDSQA), serve as a signal peptide directing secretion. VWFC domains lie at 31-96 (KVCL…PRCV) and 109-175 (KSCQ…QTCK). Asparagine 114 is a glycosylation site (N-linked (GlcNAc...) asparagine). Position 182 is a phosphoserine (serine 182). The span at 182–191 (STEENLTQLQ) shows a compositional bias: polar residues. Residues 182-216 (STEENLTQLQHGERHSQDPCSERRGPSTPAPTSLS) form a disordered region. Residue asparagine 186 is glycosylated (N-linked (GlcNAc...) asparagine). Residues 192 to 206 (HGERHSQDPCSERRG) show a composition bias toward basic and acidic residues. The span at 207 to 216 (PSTPAPTSLS) shows a compositional bias: low complexity. The VWFC 3 domain maps to 246–311 (KACTHNGKTY…VAGKCCKICP (66 aa)).

As to quaternary structure, interacts with GDF5. May interact with INHBA, BMP2, BMP4, BMP5, BMP6, and BMP7. As to expression, weakly expressed in the liver and kidney. In reproductive organs expressed in connective tissues such as ligaments of the ovary and oviduct in females, and of testis, epididymis and certain male accessory sex glands in males. Expression was high in uterine myometrium. Weakly expressed in cartilage of the femoral head, patella, articular facets of vertebrae, in the annulus fibrosus of intervertebral disks. In normal cartilage, expression was confined to articular chondrocytes especially in the superficial zone.

It localises to the secreted. Its function is as follows. Implicated in tumor angiogenesis. May inhibits BMPs activity by blocking their interaction with their receptors. Has a negative regulator effect on the cartilage formation/regeneration from immature mesenchymal cells, by preventing or reducing the rate of matrix accumulation. May play a role during myoblast and osteoblast differentiation, and maturation. This chain is Chordin-like protein 2 (Chrdl2), found in Mus musculus (Mouse).